The primary structure comprises 397 residues: uncharacterized protein (397 aa).

Transmembrane regions (helical) follow at residues 10 to 30 (FIIFVLMICTFSIGYTEYAVM), 48 to 68 (GLLVTAYAASVCLTGPLVTII), 76 to 96 (PVLLGLMAIFILSNLMSALAP), 106 to 126 (ILSASIHGAFFAIAMVFASEM), 141 to 161 (GGLTVALMLGVPFGSYLGDVL), 165 to 185 (AVFSIITALGVIGFLGLMAAV), 209 to 229 (LFSFAITILGYSGVFIAYTFI), 242 to 262 (VGITGALFAYGLGGVAGNFFA), 274 to 294 (MIGVMIGLIGVLAVFPYIAIY), 296 to 316 (AAAIVATFLFGACAFGTPPLL), 334 to 354 (VSVSAFNLANALGAWIGGMIL), and 363 to 383 (LFAGGALMTACGLVLSTFAHL).

The protein belongs to the major facilitator superfamily.

It localises to the cell membrane. This is an uncharacterized protein from Bacillus subtilis (strain 168).